The chain runs to 205 residues: uncharacterized protein (205 aa).

Positions 1-18 (MKASLALLSLLTAFTSHS) are cleaved as a signal peptide.

This is an uncharacterized protein from Escherichia coli (strain K12).